Consider the following 511-residue polypeptide: Vesicular acetylcholine transporter (511 aa).

The Cytoplasmic segment spans residues 1 to 36; that stretch reads MVVGQAKAAMGKISSAIGERSKRISGAMNEPLRKRK. The chain crosses the membrane as a helical span at residues 37 to 57; it reads ILLVIVCIAMLLDNMLYMVIV. The Lumenal, vesicle segment spans residues 58–108; it reads PIVPNYLETIRTYKLVYITIPSNGTNGSLLNSTQRAVLERNPNANEDIQIG. Asparagine 80, asparagine 83, and asparagine 88 each carry an N-linked (GlcNAc...) asparagine glycan. Residues 109–129 form a helical membrane-spanning segment; it reads VLFASKAILQLLSNPFTGTFI. The Cytoplasmic portion of the chain corresponds to 130-135; the sequence is DRVGYD. A helical membrane pass occupies residues 136 to 156; sequence IPLLIGLTIMFFSTITFAFGE. Residues 157-165 lie on the Lumenal, vesicle side of the membrane; the sequence is SYAILFAAR. A helical membrane pass occupies residues 166 to 186; it reads SLQGLGSAFADTSGIAMIADK. Over 187 to 197 the chain is Cytoplasmic; sequence YTEESERTQAL. A helical transmembrane segment spans residues 198 to 218; the sequence is GIALAFISFGSLVAPPFGGVL. Over 219-225 the chain is Lumenal, vesicle; sequence YQFAGKW. Residues 226 to 246 form a helical membrane-spanning segment; sequence VPFLVLSFVCLLDGILLLMVV. Residues 247 to 267 are Cytoplasmic-facing; that stretch reads TPFASRTRGNTLQGTPIHKLM. A helical membrane pass occupies residues 268 to 288; that stretch reads IDPYIAVVAGALTTCNIPLAF. The Lumenal, vesicle segment spans residues 289-306; the sequence is LEPTISNWMKKTMNASEW. N-linked (GlcNAc...) asparagine glycosylation occurs at asparagine 302. A helical transmembrane segment spans residues 307–327; sequence QMGITWLPAFFPHILGVYITV. Topologically, residues 328–337 are cytoplasmic; the sequence is KLAAKYPNYQ. The helical transmembrane segment at 338-358 threads the bilayer; that stretch reads WLYGAFGLVIIGVSSCTIPAC. Residues 359–363 lie on the Lumenal, vesicle side of the membrane; sequence RNFEE. The chain crosses the membrane as a helical span at residues 364–384; that stretch reads LIIPLCALCFGIALVDTALLP. Over 385–400 the chain is Cytoplasmic; that stretch reads TLAFLVDIRYVSVYGS. A helical membrane pass occupies residues 401 to 421; sequence VYAIADISYSVAYALGPIMAG. At 422 to 428 the chain is on the lumenal, vesicle side; the sequence is QIVHDLG. The chain crosses the membrane as a helical span at residues 429-449; that stretch reads FVQLNLGMGLVNILYAPALLF. Topologically, residues 450 to 511 are cytoplasmic; it reads LRNVCQMKPS…VLSDQEGYSE (62 aa). Positions 486-511 are disordered; sequence AKEPHGTSSGNHSVHAVLSDQEGYSE.

This sequence belongs to the major facilitator superfamily. Vesicular transporter family. As to expression, high expression in the electric lobe of the brain.

It is found in the membrane. Functionally, involved in acetylcholine transport into synaptic vesicles. The protein is Vesicular acetylcholine transporter of Torpedo torpedo (Common torpedo).